Here is a 272-residue protein sequence, read N- to C-terminus: Undecaprenyl-diphosphatase (272 aa).

Helical transmembrane passes span 4–24 (FEVIKALFLGFVEGLTEFLPI), 43–63 (GGRVFEVVIQLGAILAVCWLY), 86–106 (ISVLIAFSPAVIIGVLAVDFI), 109–129 (VLFSPIVVAIALIVGALIIFW), 145–165 (ITFKQALLVGLAQCVAMIPGT), 186–206 (TEFSFFLAMPTMLGAATFDLI), 222–242 (VGFVAAFIAALLVVKALVLFV), and 249–269 (VFAWYRIVLGVIILIAAMFFN).

Belongs to the UppP family.

The protein localises to the cell inner membrane. It carries out the reaction di-trans,octa-cis-undecaprenyl diphosphate + H2O = di-trans,octa-cis-undecaprenyl phosphate + phosphate + H(+). Catalyzes the dephosphorylation of undecaprenyl diphosphate (UPP). Confers resistance to bacitracin. This is Undecaprenyl-diphosphatase from Acinetobacter baumannii (strain AB307-0294).